We begin with the raw amino-acid sequence, 56 residues long: ComX pheromone (56 aa).

The propeptide occupies 1–50 (MMQDLINYFLSYPEVLKKLKNREACLIGFSSNETETIIKAYNDYHLSSPT). The residue at position 54 (Trp54) is a Tryptophan derivative. Trp54 carries the 3'-farnesyl-2',N2-cyclotryptophan lipid modification.

Interacts directly with the sensor histidine kinase ComP and stimulates its activity. In terms of processing, trp-54 is modified by farnesylation, which is essential for activity. Modified by the tryptophan prenyltransferase ComQ before export to the extracellular environment. The type of isoprenyl derivative differs among the different pherotypes and depends on ComX primary sequence.

Its subcellular location is the secreted. Its function is as follows. Part of a major quorum-sensing system that regulates the development of genetic competence. Acts through the activation of the two-component regulatory system ComP/ComA composed of a sensor histidine kinase, ComP, and a response regulator, ComA. This is ComX pheromone from Bacillus mojavensis.